The sequence spans 457 residues: ATP synthase subunit beta (457 aa).

147-154 is a binding site for ATP; the sequence is GGAGVGKT.

The protein belongs to the ATPase alpha/beta chains family. F-type ATPases have 2 components, CF(1) - the catalytic core - and CF(0) - the membrane proton channel. CF(1) has five subunits: alpha(3), beta(3), gamma(1), delta(1), epsilon(1). CF(0) has three main subunits: a(1), b(2) and c(9-12). The alpha and beta chains form an alternating ring which encloses part of the gamma chain. CF(1) is attached to CF(0) by a central stalk formed by the gamma and epsilon chains, while a peripheral stalk is formed by the delta and b chains.

It localises to the cell inner membrane. The enzyme catalyses ATP + H2O + 4 H(+)(in) = ADP + phosphate + 5 H(+)(out). Its function is as follows. Produces ATP from ADP in the presence of a proton gradient across the membrane. The catalytic sites are hosted primarily by the beta subunits. The sequence is that of ATP synthase subunit beta from Haemophilus ducreyi (strain 35000HP / ATCC 700724).